A 901-amino-acid polypeptide reads, in one-letter code: HTH-type transcriptional regulator MalT (901 aa).

An ATP-binding site is contributed by 39–46 (SPAGYGKT). In terms of domain architecture, HTH luxR-type spans 829-894 (ELIRTSPLTQ…DAVQHAQQLL (66 aa)). The segment at residues 853–872 (NEQIAGELAVAATTIKTHIR) is a DNA-binding region (H-T-H motif).

This sequence belongs to the MalT family. As to quaternary structure, monomer in solution. Oligomerizes to an active state in the presence of the positive effectors ATP and maltotriose.

With respect to regulation, activated by ATP and maltotriose, which are both required for DNA binding. Its function is as follows. Positively regulates the transcription of the maltose regulon whose gene products are responsible for uptake and catabolism of malto-oligosaccharides. Specifically binds to the promoter region of its target genes, recognizing a short DNA motif called the MalT box. The sequence is that of HTH-type transcriptional regulator MalT from Salmonella gallinarum (strain 287/91 / NCTC 13346).